The chain runs to 61 residues: MAKKSMIIRALRKPKYKTRQNNRCKLCGRPRGYLRDFCMCRICFRKYASQGLIPGVSKSSW.

The Zn(2+) site is built by Cys-24, Cys-27, Cys-40, and Cys-43.

Belongs to the universal ribosomal protein uS14 family. Zinc-binding uS14 subfamily. In terms of assembly, part of the 30S ribosomal subunit. Contacts proteins S3 and S10. It depends on Zn(2+) as a cofactor.

Binds 16S rRNA, required for the assembly of 30S particles and may also be responsible for determining the conformation of the 16S rRNA at the A site. In Borrelia garinii subsp. bavariensis (strain ATCC BAA-2496 / DSM 23469 / PBi) (Borreliella bavariensis), this protein is Small ribosomal subunit protein uS14.